Here is a 222-residue protein sequence, read N- to C-terminus: Eukaryotic translation initiation factor 4E-1 (222 aa).

Basic and acidic residues predominate over residues 1–22 (MVDEVEKPASLEESKTNTREVE). A disordered region spans residues 1-37 (MVDEVEKPASLEESKTNTREVEEGAEEVIESDDTMSS). Acidic residues predominate over residues 23-33 (EGAEEVIESDD). 2 EIF4G-binding regions span residues 47 to 50 (HPLE) and 57 to 93 (FDNP…NNIH). Residues 65-70 (KQAAWG), K97, and 115-116 (WE) contribute to the mRNA site. C120 and C158 are oxidised to a cystine. Residues 141-150 (YTLLAMIGEQ) are EIF4G-binding. MRNA is bound by residues 165–170 (RVRQEK) and 210–214 (KKLDR).

The protein belongs to the eukaryotic initiation factor 4E family. As to quaternary structure, EIF4F is a multi-subunit complex, the composition of which varies with external and internal environmental conditions. It is composed of at least EIF4A, EIF4E and EIF4G. EIF4E is also known to interact with other partners. In higher plants two isoforms of EIF4F have been identified, named isoform EIF4F and isoform EIF(iso)4F. Isoform EIF4F has subunits p220 and p26, whereas isoform EIF(iso)4F has subunits p82 and p28. In terms of processing, according to the redox status, the Cys-120-Cys-158 disulfide bridge may have a role in regulating protein function by affecting its ability to bind capped mRNA. In terms of tissue distribution, expressed ubiquitously in seedlings, roots, leaves, sepals, petals, anthers and dehisced pollen, with highest levels in pollen, maturing anthers and roots. Strongly expressed in susceptible plants but not in resistant ones.

Its subcellular location is the nucleus. The protein localises to the cytoplasm. In terms of biological role, component of the protein complex eIF4F, which is involved in the recognition of the mRNA cap, ATP-dependent unwinding of 5'-terminal secondary structure and recruitment of mRNA to the ribosome. Recognizes and binds the 7-methylguanosine-containing mRNA cap during an early step in the initiation of protein synthesis and facilitates ribosome binding by inducing the unwinding of the mRNAs secondary structures. Key component of recessive resistance to potyviruses. (Microbial infection) Susceptibility host factor required for viral infection (e.g. potato virus Y (PVY) and pepper mottle virus (PepMoV)) by recruiting viral RNAs to the host ribosomal complex via an interaction with viral genome-linked protein (VPg). This Nicotiana tabacum (Common tobacco) protein is Eukaryotic translation initiation factor 4E-1.